The primary structure comprises 727 residues: Probable glutamate carboxypeptidase ARB_02390 (727 aa).

A signal peptide spans 1–18 (MIVKSLSLLALAAATVEG). 2 N-linked (GlcNAc...) asparagine glycosylation sites follow: Asn-60 and Asn-80. The PA domain occupies 158–296 (ATAEYVYVGR…ISQLDAQPIL (139 aa)). Arg-197 is a substrate binding site. N-linked (GlcNAc...) asparagine glycosylation is present at Asn-223. Residues 255 to 279 (FPGDPTTPGYPSRPDSPRKDKSPVV) are disordered. 2 residues coordinate Ca(2+): Thr-261 and Tyr-264. The interval 266–565 (SRPDSPRKDK…QFLGLLGYHL (300 aa)) is NAALADase. Residues Asn-310, Asn-319, and Asn-353 are each glycosylated (N-linked (GlcNAc...) asparagine). His-366 is a binding site for Zn(2+). Residue Glu-414 is the For NAALADase activity of the active site. Residue Glu-415 coordinates Zn(2+). Ca(2+) contacts are provided by Glu-423 and Glu-426. Asp-443 is a binding site for Zn(2+). Residues 516–518 (TGA) and Tyr-530 each bind substrate. Residue His-531 participates in Zn(2+) binding. Catalysis depends on Ser-604, which acts as the Charge relay system. N-linked (GlcNAc...) asparagine glycosylation occurs at Asn-614. Residue His-665 is the Charge relay system of the active site. Residue 675-676 (GY) participates in substrate binding. A glycan (N-linked (GlcNAc...) asparagine) is linked at Asn-692.

Belongs to the peptidase M28 family. M28B subfamily. Zn(2+) is required as a cofactor.

The protein resides in the secreted. It carries out the reaction Release of an unsubstituted, C-terminal glutamyl residue, typically from Ac-Asp-Glu or folylpoly-gamma-glutamates.. Has both folate hydrolase and N-acetylated-alpha-linked-acidic dipeptidase (NAALADase) activity. Also exhibits a dipeptidyl-peptidase IV type activity. The sequence is that of Probable glutamate carboxypeptidase ARB_02390 from Arthroderma benhamiae (strain ATCC MYA-4681 / CBS 112371) (Trichophyton mentagrophytes).